Here is a 92-residue protein sequence, read N- to C-terminus: Small ribosomal subunit protein uS19 (92 aa).

This sequence belongs to the universal ribosomal protein uS19 family.

In terms of biological role, protein S19 forms a complex with S13 that binds strongly to the 16S ribosomal RNA. In Magnetococcus marinus (strain ATCC BAA-1437 / JCM 17883 / MC-1), this protein is Small ribosomal subunit protein uS19.